The following is a 490-amino-acid chain: Ribulose bisphosphate carboxylase large chain (490 aa).

Substrate-binding residues include Asn-127 and Thr-177. Catalysis depends on Lys-179, which acts as the Proton acceptor. A substrate-binding site is contributed by Lys-181. 3 residues coordinate Mg(2+): Lys-205, Asp-207, and Glu-208. At Lys-205 the chain carries N6-carboxylysine. His-297 serves as the catalytic Proton acceptor. Positions 298, 330, and 382 each coordinate substrate.

It belongs to the RuBisCO large chain family. Type I subfamily. In terms of assembly, heterohexadecamer of 8 large chains and 8 small chains. It depends on Mg(2+) as a cofactor.

It is found in the plastid. The protein localises to the chloroplast. It carries out the reaction 2 (2R)-3-phosphoglycerate + 2 H(+) = D-ribulose 1,5-bisphosphate + CO2 + H2O. The enzyme catalyses D-ribulose 1,5-bisphosphate + O2 = 2-phosphoglycolate + (2R)-3-phosphoglycerate + 2 H(+). RuBisCO catalyzes two reactions: the carboxylation of D-ribulose 1,5-bisphosphate, the primary event in carbon dioxide fixation, as well as the oxidative fragmentation of the pentose substrate in the photorespiration process. Both reactions occur simultaneously and in competition at the same active site. This Trieres chinensis (Marine centric diatom) protein is Ribulose bisphosphate carboxylase large chain.